Here is a 768-residue protein sequence, read N- to C-terminus: Valine--tRNA ligase (768 aa).

A 'HIGH' region motif is present at residues 37-47 (PTVSGKMHMGH). The 'KMSKS' region motif lies at 510–514 (KMSKS). K513 is a binding site for ATP.

Belongs to the class-I aminoacyl-tRNA synthetase family. ValS type 2 subfamily.

It is found in the cytoplasm. The enzyme catalyses tRNA(Val) + L-valine + ATP = L-valyl-tRNA(Val) + AMP + diphosphate. In terms of biological role, catalyzes the attachment of valine to tRNA(Val). As ValRS can inadvertently accommodate and process structurally similar amino acids such as threonine, to avoid such errors, it has a 'posttransfer' editing activity that hydrolyzes mischarged Thr-tRNA(Val) in a tRNA-dependent manner. The chain is Valine--tRNA ligase from Picrophilus torridus (strain ATCC 700027 / DSM 9790 / JCM 10055 / NBRC 100828 / KAW 2/3).